The chain runs to 326 residues: Apolipoprotein F (326 aa).

The first 35 residues, 1–35 (MTGLCGYSAPDMRGLRLIMIPVELLLCYLLLHPVD), serve as a signal peptide directing secretion. A propeptide spanning residues 36–164 (ATSYGKQTNV…EQQSTGRVGR (129 aa)) is cleaved from the precursor. N118 is a glycosylation site (N-linked (GlcNAc...) asparagine). O-linked (GalNAc...) threonine glycosylation occurs at T274. S323 carries the post-translational modification Phosphoserine.

The protein belongs to the apolipoprotein F family. Post-translationally, O-glycosylated with core 1 or possibly core 8 glycans. As to expression, expressed by the liver and secreted in plasma.

Its subcellular location is the secreted. Its function is as follows. Minor apolipoprotein that associates with LDL. Inhibits cholesteryl ester transfer protein (CETP) activity and appears to be an important regulator of cholesterol transport. Also associates to a lesser degree with VLDL, Apo-AI and Apo-AII. The protein is Apolipoprotein F (APOF) of Homo sapiens (Human).